Here is a 127-residue protein sequence, read N- to C-terminus: Fluoride-specific ion channel FluC (127 aa).

The next 4 membrane-spanning stretches (helical) occupy residues 4–24 (LLLA…MLSM), 35–55 (IGTL…FAWF), 71–91 (TGFC…VFLL), and 103–123 (VLIN…LFSA). Positions 75 and 78 each coordinate Na(+).

This sequence belongs to the fluoride channel Fluc/FEX (TC 1.A.43) family.

It is found in the cell inner membrane. The enzyme catalyses fluoride(in) = fluoride(out). Na(+) is not transported, but it plays an essential structural role and its presence is essential for fluoride channel function. Fluoride-specific ion channel. Important for reducing fluoride concentration in the cell, thus reducing its toxicity. The polypeptide is Fluoride-specific ion channel FluC (Salmonella agona (strain SL483)).